We begin with the raw amino-acid sequence, 287 residues long: Protease HtpX (287 aa).

2 consecutive transmembrane segments (helical) span residues 4–24 (IFLLIATNLAVLLVASIVMSI) and 33–53 (GGLLVFAAIFGFGGAFISLAI). Zn(2+) is bound at residue His139. Glu140 is a catalytic residue. Residue His143 participates in Zn(2+) binding. The next 2 membrane-spanning stretches (helical) occupy residues 154 to 174 (LIQGVVNTFVIFAARVVAGII) and 195 to 215 (AVVFVLDMLFGILASIIVAYF). Glu220 contributes to the Zn(2+) binding site.

Belongs to the peptidase M48B family. Zn(2+) serves as cofactor.

It localises to the cell inner membrane. The protein is Protease HtpX of Shewanella putrefaciens (strain CN-32 / ATCC BAA-453).